We begin with the raw amino-acid sequence, 395 residues long: MLPAVGSADEEEDPAEEDCPELVPMETTQSEEEEKSGLGAKIPVTIITGYLGAGKTTLLNYILTEQHSKRVAVILNEFGEGSALEKSLAVSQGGELYEEWLELRNGCLCCSVKDNGLRAIENLMQKKGKFDYILLETTGLADPGAVASMFWVDAELGSDIYLDGIITIVDSKYGLKHLAEEKPDGLINEATRQVALADAILINKTDLVPEEDVKKLRATIRSINGLGQILETQRSRVDLSNVLDLHAFDSLSGISLQKKLQHVPGTQPHLDQSIVTITFEVPGNAKEEHLNMFIQNLLWEKNVRNKDNHCMEVIRLKGLVSIKDKSQQVIVQGVHELYDLEETPVSWKDDTERTNRLVLLGRNLDKDILKQLFIATVTETEKQWTTHFKEDQVCT.

The disordered stretch occupies residues 1 to 36 (MLPAVGSADEEEDPAEEDCPELVPMETTQSEEEEKS). Over residues 8-20 (ADEEEDPAEEDCP) the composition is skewed to acidic residues. The psi-PxLVp motif signature appears at 17 to 24 (EDCPELVP). Position 49–56 (49–56 (GYLGAGKT)) interacts with GTP. Residues C107, C109, and C110 each coordinate Zn(2+). Residues 107 to 110 (CLCC) carry the CXCC motif motif. GTP is bound by residues 110–114 (CSVKD) and 203–206 (NKTD). One can recognise a CobW C-terminal domain in the interval 274–377 (IVTITFEVPG…ILKQLFIATV (104 aa)).

Belongs to the SIMIBI class G3E GTPase family. ZNG1 subfamily.

Its subcellular location is the nucleus. The enzyme catalyses GTP + H2O = GDP + phosphate + H(+). Functionally, zinc chaperone that directly transfers zinc cofactor to target metalloproteins, thereby activating them. Catalyzes zinc insertion into the active site of methionine aminopeptidase METAP1, which function to cleave the initiator methionine from polypeptides during or after protein translation. Mechanistically, the N-terminal psi-PxLVp motif binds to the C6H2-type zinc finger of inactive form of METAP1. After formation of the docked complex, zinc is transferred from the CXCC motif in the GTPase domain of ZNG1B to the zinc binding site in the peptidase domain of METAP1 in a process requiring GTP hydrolysis. GTP/GDP exchange is required for release of active METAP1. The chain is Zinc-regulated GTPase metalloprotein activator 1B from Homo sapiens (Human).